A 257-amino-acid polypeptide reads, in one-letter code: NAD-capped RNA hydrolase NudC (257 aa).

Arg69 provides a ligand contact to substrate. Zn(2+) contacts are provided by Cys98 and Cys101. A substrate-binding site is contributed by Glu111. Zn(2+) contacts are provided by Cys116 and Cys119. Tyr124 is a substrate binding site. The region spanning 125-248 is the Nudix hydrolase domain; it reads PQIAPCIIVA…TVARRLIEDT (124 aa). A divalent metal cation-binding residues include Ala158, Glu174, and Glu178. The short motif at 159–180 is the Nudix box element; that stretch reads GFVEVGETLEQAVAREVMEESG. 192–199 provides a ligand contact to substrate; the sequence is QPWPFPQS. Glu219 serves as a coordination point for a divalent metal cation. Ala241 serves as a coordination point for substrate.

Belongs to the Nudix hydrolase family. NudC subfamily. Homodimer. Requires Mg(2+) as cofactor. It depends on Mn(2+) as a cofactor. The cofactor is Zn(2+).

It carries out the reaction a 5'-end NAD(+)-phospho-ribonucleoside in mRNA + H2O = a 5'-end phospho-adenosine-phospho-ribonucleoside in mRNA + beta-nicotinamide D-ribonucleotide + 2 H(+). The catalysed reaction is NAD(+) + H2O = beta-nicotinamide D-ribonucleotide + AMP + 2 H(+). The enzyme catalyses NADH + H2O = reduced beta-nicotinamide D-ribonucleotide + AMP + 2 H(+). In terms of biological role, mRNA decapping enzyme that specifically removes the nicotinamide adenine dinucleotide (NAD) cap from a subset of mRNAs by hydrolyzing the diphosphate linkage to produce nicotinamide mononucleotide (NMN) and 5' monophosphate mRNA. The NAD-cap is present at the 5'-end of some mRNAs and stabilizes RNA against 5'-processing. Has preference for mRNAs with a 5'-end purine. Catalyzes the hydrolysis of a broad range of dinucleotide pyrophosphates. The polypeptide is NAD-capped RNA hydrolase NudC (Salmonella typhi).